The sequence spans 238 residues: uncharacterized protein (238 aa).

To M.thermoautotrophicum MTH564.

This is an uncharacterized protein from Methanocaldococcus jannaschii (strain ATCC 43067 / DSM 2661 / JAL-1 / JCM 10045 / NBRC 100440) (Methanococcus jannaschii).